The chain runs to 337 residues: tRNA N6-adenosine threonylcarbamoyltransferase (337 aa).

Fe cation is bound by residues H114 and H118. Residues L136–G140, D169, G182, D186, and N275 each bind substrate. D301 contributes to the Fe cation binding site.

It belongs to the KAE1 / TsaD family. Requires Fe(2+) as cofactor.

The protein localises to the cytoplasm. The enzyme catalyses L-threonylcarbamoyladenylate + adenosine(37) in tRNA = N(6)-L-threonylcarbamoyladenosine(37) in tRNA + AMP + H(+). In terms of biological role, required for the formation of a threonylcarbamoyl group on adenosine at position 37 (t(6)A37) in tRNAs that read codons beginning with adenine. Is involved in the transfer of the threonylcarbamoyl moiety of threonylcarbamoyl-AMP (TC-AMP) to the N6 group of A37, together with TsaE and TsaB. TsaD likely plays a direct catalytic role in this reaction. The chain is tRNA N6-adenosine threonylcarbamoyltransferase from Streptococcus thermophilus (strain CNRZ 1066).